A 201-amino-acid chain; its full sequence is MYTLLSGLYKYMFQKDEYCILILGLDNAGKTTFLEQSKTRFNKNYKGMSLSKITTTVGLNIGTVDVGKARLMFWDLGGQEELQSLWDKYYAECHGVIYVIDSTDEERLSESKEAFEKVVSSEALDGVPILVLANKQDVETCLSIPDIKTAFSDCTCKIGRRDCLTQACSALTGKGVREGIEWMVKCVVRNVHRPPRQRDIT.

Met-1 is modified (N-acetylmethionine). GTP-binding positions include 24–31 (GLDNAGKT), 75–79 (DLGGQ), and 134–137 (NKQD).

It belongs to the small GTPase superfamily. Arf family. Interacts with SYS1.

The protein resides in the golgi apparatus. It is found in the trans-Golgi network. Functionally, trans-Golgi-associated GTPase that regulates protein sorting. Controls the targeting of ARL1 and its effector to the trans-Golgi. Required for the lipidation of chylomicrons in the intestine and required for VLDL lipidation in the liver. This Mus musculus (Mouse) protein is ADP-ribosylation factor-related protein 1 (Arfrp1).